The sequence spans 217 residues: Ribonuclease T (217 aa).

One can recognise an Exonuclease domain in the interval 20–195; it reads VVVDVETAGL…YDTERTAMLF (176 aa). Asp-23, Glu-25, His-182, and Asp-187 together coordinate Mg(2+). His-182 acts as the Proton donor/acceptor in catalysis.

The protein belongs to the RNase T family. Homodimer. Mg(2+) serves as cofactor.

Functionally, trims short 3' overhangs of a variety of RNA species, leaving a one or two nucleotide 3' overhang. Responsible for the end-turnover of tRNA: specifically removes the terminal AMP residue from uncharged tRNA (tRNA-C-C-A). Also appears to be involved in tRNA biosynthesis. The sequence is that of Ribonuclease T from Blochmanniella pennsylvanica (strain BPEN).